Consider the following 62-residue polypeptide: MTIAFQLAVFALIITSSILLISVPVVFASPDGWSSNKNVVFSGTSLWIGLVFLVGILNSLIS.

2 consecutive transmembrane segments (helical) span residues 8–28 (AVFA…VVFA) and 41–61 (FSGT…NSLI).

It belongs to the PsbZ family. PSII is composed of 1 copy each of membrane proteins PsbA, PsbB, PsbC, PsbD, PsbE, PsbF, PsbH, PsbI, PsbJ, PsbK, PsbL, PsbM, PsbT, PsbY, PsbZ, Psb30/Ycf12, at least 3 peripheral proteins of the oxygen-evolving complex and a large number of cofactors. It forms dimeric complexes.

The protein localises to the plastid. The protein resides in the chloroplast thylakoid membrane. May control the interaction of photosystem II (PSII) cores with the light-harvesting antenna, regulates electron flow through the 2 photosystem reaction centers. PSII is a light-driven water plastoquinone oxidoreductase, using light energy to abstract electrons from H(2)O, generating a proton gradient subsequently used for ATP formation. In Arabidopsis thaliana (Mouse-ear cress), this protein is Photosystem II reaction center protein Z.